The sequence spans 652 residues: MCGLLAFVAAPAGAAGPEGADAASAIARASHLMRHRGPDESGTWHAVDGASGGVVFGFNRLSIIDIAHSHQPLRWGPPEAPDRYVLVFNGEIYNYLELRDELRTQHGAVFATDGDGEAILAGYHHWGTEVLQRLRGMFAFALWDTVTRELFCARDPFGIKPLFIATGAGGTAVASEKKCLLDLVELVGFDTEIDHRALQHYTVLQYVPEPETLHRGVRRLESGCFARIRADQLAPVITRYFVPRFAASPITNDNDQARYDEITAVLEDSVAKHMRADVTVGAFLSGGIDSTAIAALAIRHNPRLITFTTGFEREGFSEIDVAVASAEAIGARHIAKVVSADEFVAALPEIVWYLDEPVADPALVPLFFVAREARKHVKVVLSGEGADELFGGYTIYREPLSLRPFDYLPKPLRRSMGKVSKPLPEGMRGKSLLHRGSLTLEERYYGNARSFSGAQLREVLPGFRPDWTHTDVTAPVYAESAGWDPVARMQHIDLFTWLRGDILVKADKITMANSLELRVPFLDPEVFAVASRLPAGAKITRTTTKYALRRALEPIVPAHVLHRPKLGFPVPIRHWLRAGELLEWAYATVGSSQAGHLVDIAAVYRMLDEHRCGSSDHSRRLWTMLIFMLWHAIFVEHSVVPQISEPQYPVQL.

Cys-2 (for GATase activity) is an active-site residue. The Glutamine amidotransferase type-2 domain maps to 2-231 (CGLLAFVAAP…SGCFARIRAD (230 aa)). L-glutamine contacts are provided by residues 60–64 (RLSII), 89–91 (NGE), and Asp-115. An ATP-binding site is contributed by 382–383 (SG).

It belongs to the asparagine synthetase family.

It catalyses the reaction L-aspartate + L-glutamine + ATP + H2O = L-asparagine + L-glutamate + AMP + diphosphate + H(+). The protein operates within amino-acid biosynthesis; L-asparagine biosynthesis; L-asparagine from L-aspartate (L-Gln route): step 1/1. The polypeptide is Putative asparagine synthetase [glutamine-hydrolyzing] (asnB) (Mycobacterium bovis (strain ATCC BAA-935 / AF2122/97)).